The primary structure comprises 280 residues: Undecaprenyl-diphosphatase (280 aa).

Helical transmembrane passes span 19-39 (FLPVSSTGHLFLFSSFFPFSG), 44-64 (FDDLFDIFIQSGAILSVLFLY), 89-109 (FYFLVQIVIGAFPILVVGFIA), 125-145 (ILASAWIFGGVLILIAEWFFQ), 156-176 (VGFRDAILIGIFQCVALIPGV), 197-217 (AEFSFFLAVPVLLAAGIYKLI), 226-246 (VTIPILAFGFLISFLLCTLVI), and 259-279 (GVFGIYRILLGVGVLVFTKFI).

The protein belongs to the UppP family.

It is found in the cell inner membrane. It catalyses the reaction di-trans,octa-cis-undecaprenyl diphosphate + H2O = di-trans,octa-cis-undecaprenyl phosphate + phosphate + H(+). Functionally, catalyzes the dephosphorylation of undecaprenyl diphosphate (UPP). Confers resistance to bacitracin. This Leptospira borgpetersenii serovar Hardjo-bovis (strain L550) protein is Undecaprenyl-diphosphatase.